A 368-amino-acid polypeptide reads, in one-letter code: Peptide chain release factor 2 (368 aa).

Gln250 carries the N5-methylglutamine modification.

This sequence belongs to the prokaryotic/mitochondrial release factor family. Post-translationally, methylated by PrmC. Methylation increases the termination efficiency of RF2.

Its subcellular location is the cytoplasm. Its function is as follows. Peptide chain release factor 2 directs the termination of translation in response to the peptide chain termination codons UGA and UAA. This Chlamydia trachomatis serovar L2b (strain UCH-1/proctitis) protein is Peptide chain release factor 2.